A 162-amino-acid chain; its full sequence is UPF0305 protein MmarC5_0909 (162 aa).

The protein belongs to the UPF0305 family.

This is UPF0305 protein MmarC5_0909 from Methanococcus maripaludis (strain C5 / ATCC BAA-1333).